A 281-amino-acid chain; its full sequence is Auxin-responsive protein IAA19 (281 aa).

The short motif at 40 to 44 (LRLGL) is the EAR-like (transcriptional repression) element. A disordered region spans residues 66-126 (LGPAPPPRGG…AAGAPRAAKA (61 aa)). The segment covering 79–91 (GFVDSLDRSEGRR) has biased composition (basic and acidic residues). Residues 114 to 126 (GEAAAGAPRAAKA) are compositionally biased toward low complexity. Residues 161 to 265 (CCYVKVSMDG…RKLRIMRGSD (105 aa)) enclose the PB1 domain.

It belongs to the Aux/IAA family. As to quaternary structure, homodimers and heterodimers. Expressed in etiolated seedlings and flowers.

Its subcellular location is the nucleus. In terms of biological role, aux/IAA proteins are short-lived transcriptional factors that function as repressors of early auxin response genes at low auxin concentrations. This Oryza sativa subsp. japonica (Rice) protein is Auxin-responsive protein IAA19 (IAA19).